The following is a 102-amino-acid chain: Small ribosomal subunit protein eS24 (102 aa).

It belongs to the eukaryotic ribosomal protein eS24 family.

The sequence is that of Small ribosomal subunit protein eS24 from Halorubrum lacusprofundi (strain ATCC 49239 / DSM 5036 / JCM 8891 / ACAM 34).